The chain runs to 741 residues: Protein ACCUMULATION AND REPLICATION OF CHLOROPLASTS 3, chloroplastic (741 aa).

Residues 1–41 constitute a chloroplast transit peptide; sequence MPISMELPVFSTLRVPLFSRLALLPTFGVPFSSLGATTRLN. Disordered regions lie at residues 444-465 and 539-558; these read ENGDDSEYPLKEGEPSRNSRLD and DSREESFFNPNGSTKDSSDT. Positions 451 to 465 are enriched in basic and acidic residues; the sequence is YPLKEGEPSRNSRLD. Polar residues predominate over residues 546–558; it reads FNPNGSTKDSSDT. MORN repeat units lie at residues 612-628, 630-652, and 653-675; these read QGGLPEGKGRLVLGDGS, YDGMWHNGKRSGLGTFYFKNGDV, and FQGTWREDLIHGKGWFYFHKGDR.

In terms of assembly, self-interacts. Interacts with FTSZ, CDP1/PARC6 (via N-terminus), MIND1 and MINE1. Part of a complex made of ARC3, ARC6, FTSZ1 and FTSZ2. Recruited to the middle of the plastid by CDP1/PARC6 where subsequent complex made of CDP1/PARC6, ARC3 and FtsZ proteins can form; this complex enhances the dynamics of Z rings during chloroplast division. Binding to FTSZ2-1 is enabled by ARC6.

The protein resides in the plastid. Its subcellular location is the chloroplast outer membrane. It localises to the chloroplast stroma. Its function is as follows. Together with MIND1 and MCD1, regulates FtsZ ring positioning in chloroplasts in an ARC6-dependent manner. Z-ring accessory protein involved in the initiation of plastid division and division site placement (might functionally replace bacterial MinC). Acts as a disassembly factor that accelerates fragmentation and depolymerization of existing FtsZ2 filaments by enhancing FTSZ2 GTPase activity, thus leading to the conversion of FTSZ2 bound GTP into GDP, a process which triggers FtsZ2 filaments destabilization. Prevents misplaced Z-ring formation at chloroplast stroma nondivision sites. May control the rate of chloroplast expansion. Seems to influence stromule (stroma-filled tubular extensions of the plastid envelope membrane) length and frequency. The protein is Protein ACCUMULATION AND REPLICATION OF CHLOROPLASTS 3, chloroplastic of Arabidopsis thaliana (Mouse-ear cress).